The chain runs to 139 residues: Proline-rich nuclear receptor coactivator 2 (139 aa).

Disordered stretches follow at residues 1-51 (MGGG…GYNS), 61-80 (NGGKNKNFPNNQSWNSSLSG), and 89-110 (ANQNYAGAKFSEPPSPSVLPKP). Polar residues-rich tracts occupy residues 11 to 36 (APQSRNVSKNQQQLNRQKTKEQNSQM) and 61 to 79 (NGGKNKNFPNNQSWNSSLS). Residues 99–105 (SEPPSPS) carry the SH3-binding motif. The segment covering 101–110 (PPSPSVLPKP) has biased composition (pro residues).

It belongs to the PNRC family. PNRC2 subfamily. Interacts with UPF1/RENT1; preferentially interacts with hyperphosphorylated form. Interacts with DCP1A. Interacts with many nuclear receptors including ESR1, ESRRA, ESRRG, NR3C1/GR, NR5A1, PGR, TR, RAR and RXR. As to expression, expressed in heart, lung, muscle and brain.

It localises to the nucleus. It is found in the cytoplasm. The protein localises to the P-body. Involved in nonsense-mediated mRNA decay (NMD) by acting as a bridge between the mRNA decapping complex and the NMD machinery. May act by targeting the NMD machinery to the P-body and recruiting the decapping machinery to aberrant mRNAs. Required for UPF1/RENT1 localization to the P-body. Plays a role in glucocorticoid receptor-mediated mRNA degradation by interacting with the glucocorticoid receptor NR3C1 in a ligand-dependent manner when it is bound to the 5' UTR of target mRNAs and recruiting the RNA helicase UPF1 and the mRNA-decapping enzyme DCP1A, leading to RNA decay. Also acts as a nuclear receptor coactivator. May play a role in controlling the energy balance between energy storage and energy expenditure. This chain is Proline-rich nuclear receptor coactivator 2 (PNRC2), found in Homo sapiens (Human).